The sequence spans 402 residues: MSSLQPTLTNERIGVLDVLRGMAIFGILFVNLAHFSYPDMYLSMLGKENFFMDKWSEADFAAADILKFFIQTKCILLFSFLFGFGMVVMMERAENKGKRFVPLYVRRLMALLLFGTIHAFLIWDGDILTEYALLGFVLLLFRKAKPKTLLIWAVSLYLLFSIPFMLTSFDQSNGQEWVQAVTQQAKQAIHVYGSGSLKDIAEQRIHDRLVYMSSNGMLTYNPLNYFFASIPYFSMFLLGAAAAKSRYLHEPEKHRKGLKRLWMAGLVIGIGAQVLYSVTDKEICLLIGAPFLMFFYVTTVVYLYHKTRVRTVLQSFSAVGRMAFTNYLMQSIVCTWIFYHYGLGLYGKVYPAAGVLITIAVCAVQMVFSHLWLRVFRMGPFEWLWRSATYLSWQPIAKKTKV.

The next 9 helical transmembrane spans lie at 13–33 (IGVL…VNLA), 68–88 (FFIQ…GMVV), 108–128 (LMAL…GDIL), 149–169 (LLIW…LTSF), 223–243 (LNYF…AAAA), 261–281 (LWMA…VTDK), 283–303 (ICLL…VVYL), 327–347 (YLMQ…GLYG), and 353–373 (AGVL…HLWL).

The protein resides in the cell membrane. Functionally, involved in transport. This is an uncharacterized protein from Bacillus subtilis (strain 168).